The chain runs to 403 residues: MEKGEVASLRCRLLLLLLLLTLPPTHQGRTLRHIDPIQSAQDSPAKYLSNGPGQEPVTVLTIDLTKISKPSSSFEFRTWDPEGVIFYGDTNTEDDWFMLGLRDGQLEIQLHNLWARLTVGFGPRLNDGRWHPVELKMNGDSLLLWVDGKEMLCLRQVSASLADHPQLSMRIALGGLLLPTSKLRFPLVPALDGCIRRDIWLGHQAQLSTSARTSLGNCDVDLQPGLFFPPGTHAEFSLQDIPQPHTDPWTFSLELGFKLVDGAGRLLTLGTGTNSSWLTLHLQDQTVVLSSEAEPKLALPLAVGLPLQLKLDVFKVALSQGPKMEVLSTSLLRLASLWRLWSHPQGHLSLGALPGEDSSASFCLSDLWVQGQRLDIDKALSRSQDIWTHSCPQSPSNDTHTSH.

A signal peptide spans 1-30; the sequence is MEKGEVASLRCRLLLLLLLLTLPPTHQGRT. Laminin G-like domains follow at residues 46–218 and 225–391; these read KYLS…LGNC and GLFF…THSC. A disulfide bond links C194 and C218. N-linked (GlcNAc...) asparagine glycosylation occurs at N274. The cysteines at positions 363 and 391 are disulfide-linked. Residue N397 is glycosylated (N-linked (GlcNAc...) asparagine).

In terms of assembly, homodimer. In terms of tissue distribution, isoform 2 is only expressed in the liver.

Its subcellular location is the secreted. Functions as an androgen transport protein, but may also be involved in receptor mediated processes. Each dimer binds one molecule of steroid. Specific for 5-alpha-dihydrotestosterone, testosterone, and 17-beta-estradiol. Regulates the plasma metabolic clearance rate of steroid hormones by controlling their plasma concentration. In Rattus norvegicus (Rat), this protein is Sex hormone-binding globulin (Shbg).